The following is a 129-amino-acid chain: M-zodatoxin-Lt8l (129 aa).

The first 20 residues, 1–20 (MKYFVVXXALVAAFACIAES), serve as a signal peptide directing secretion. The propeptide occupies 21-60 (KPAESEHELAEVEEENELADLEDAVWLEDLADLSDLEETR).

It belongs to the cationic peptide 06 (cytoinsectotoxin) family. As to expression, expressed by the venom gland.

It localises to the secreted. Insecticidal, cytolytic and antimicrobial peptide. Forms voltage-dependent, ion-permeable channels in membranes. At high concentration causes cell membrane lysis. In Lachesana tarabaevi (Spider), this protein is M-zodatoxin-Lt8l (cit 1-12).